The sequence spans 474 residues: MKLKLIVNGCEAPDDYKLLRTTINTVASLRKTAILRFNSERLTIISTPKSSLNSSNNGTILRGDTGQLWCTIPHDVFRLYTVISARELNTITMECNCDSLLSVFKRYDRVMNQGSSSNMTIKLQSMPEWNTNNGTLSGGTAGGVDTTSKPNPICALGITFEEIVHTSGPNDAIVMNGGVDEHNGLPTTVGTGNLLASNKVIMHSFKVPVKLLFRAQDTRIQEPMINYIQLMMYKLPPISGEFGSAFHGFIRRVERYSNVNHIHLMGVKKKEHGNEGDDVELKIIVNELDWHLEICWNGPLDSVIQRQEGLTDNPSQNQHIDTDGRQEEGSLPIIEADKPMSSLYTNTRDREMEENIRYDEDLLRIEDSSIADTRGNIYTADTSGDTEFNDISVMVEKAEQESSSTHEVIIRCKDWKVCSKLYAAFEEVVLAISHDESCVFHCSLDRGSLEDSEDVEKPRERGQIIYYIARSKGL.

S452 carries the post-translational modification Phosphoserine.

The protein belongs to the MEC3 family. As to quaternary structure, component of the checkpoint clamp complex composed of DDC1, MEC3 and RAD17. The interaction with MEC3 is performed in a RAD17-dependent manner. The checkpoint clamp complex loads onto DNA. Interacts with the DNA polymerase zeta subunit REV7. Also forms a heterotrimer with 2 RAD17 subunits. Interacts with SET1.

Its subcellular location is the nucleus. Its function is as follows. Component of the checkpoint clamp complex involved in the surveillance mechanism that allows the DNA repair pathways to act to restore the integrity of the DNA prior to DNA synthesis or separation of the replicated chromosomes. Associates with sites of DNA damage and modulates the MEC1 signaling pathway and the activation of RAD53 in response to DNA damage at phase G1. The complex also physically regulates DNA polymerase zeta-dependent mutagenesis by controlling the access of polymerase zeta to damaged DNA. This chain is DNA damage checkpoint control protein MEC3 (MEC3), found in Saccharomyces cerevisiae (strain ATCC 204508 / S288c) (Baker's yeast).